The primary structure comprises 909 residues: Myb-like protein Q (909 aa).

Disordered regions lie at residues 15–65 (TTNN…QQQQ), 84–149 (QQQN…QQIL), and 216–280 (SAPS…KGPW). The span at 17–46 (NNNSNNNNNNNNNNNNNNNNNNNNNINQNH) shows a compositional bias: low complexity. Basic residues predominate over residues 47–56 (QHQHQHHHHQ). The segment covering 84–126 (QQQNYGESTTSTSMIPPSITTSLTPLTPTLSSQPQNIQQQQQQ) has biased composition (low complexity). Residues 127–139 (QHHHQQQHHHHHQ) show a composition bias toward basic residues. A compositionally biased stretch (polar residues) spans 216-226 (SAPSTPLSMSP). HTH myb-type domains lie at 272–327 (SPGI…SPEV) and 328–378 (RKTN…LKKI). 2 consecutive DNA-binding regions (H-T-H motif) follow at residues 300–323 (WSSI…FNHL) and 351–374 (WTAI…NSTL). Over residues 379-389 (GGDSKSLNKEK) the composition is skewed to basic and acidic residues. 5 disordered regions span residues 379–482 (GGDS…NTAI), 497–531 (QTTP…QTQQ), 616–642 (SMEQ…QQQQ), 672–748 (YQQQ…HPIE), and 826–855 (LNTT…IPTP). Positions 390 to 401 (DDDDDDDEDAED) are enriched in acidic residues. Low complexity-rich tracts occupy residues 415–431 (SSSS…TNSS) and 444–482 (STTT…NTAI). A compositionally biased stretch (polar residues) spans 497 to 508 (QTTPNSSPSLSS). 4 stretches are compositionally biased toward low complexity: residues 622 to 642 (YQQQ…QQQQ), 672 to 726 (YQQQ…QQQQ), 733 to 744 (NSNNTDTTFSNS), and 826 to 851 (LNTT…NNNN).

It is found in the nucleus. This Dictyostelium discoideum (Social amoeba) protein is Myb-like protein Q (mybQ).